We begin with the raw amino-acid sequence, 129 residues long: MLMRKKKLLSRISFGSLFLLCGTILSACTWIQANLRNLLKETTGKDFDLSKAIKIPEGRQNLINSLKKSYEVNPKDTTKLLLDAWKQSSEEGKLGIADLDFDQVTNPTEKDPFKNGAKGRAFRHWISKY.

The N-terminal stretch at 1-27 is a signal peptide; the sequence is MLMRKKKLLSRISFGSLFLLCGTILSA. A lipid anchor (N-palmitoyl cysteine) is attached at Cys-28. Cys-28 carries the S-diacylglycerol cysteine lipid modification.

The protein belongs to the MG439/MG440 family.

It localises to the cell membrane. This is an uncharacterized protein from Mycoplasma pneumoniae (strain ATCC 29342 / M129 / Subtype 1) (Mycoplasmoides pneumoniae).